Reading from the N-terminus, the 367-residue chain is TATA-box-binding protein-like (367 aa).

The segment at 1–26 is disordered; sequence MKKQSKTHKVDYKYYNSGSKTSRNRN. A compositionally biased stretch (polar residues) spans 16–26; the sequence is NSGSKTSRNRN.

The protein belongs to the TBP family.

The chain is TATA-box-binding protein-like from Acanthamoeba polyphaga (Amoeba).